The chain runs to 331 residues: MDIYDDKGLQTIKLFNNEFDCIRNDIRELFKHVTDSDSIQLPMEDNSDIIENIRKILYRRLKNVECVDIDSTITFMKYDPNDDNKRTCSNWVPLTNNYMEYCLVIYLETPICGGKIKLYHPTGNIKSDKDIMFAKTLDFKSKKVLTGRKTIAVLDISVSYNRSITTIHYNDDVNIDIHTDKNGKELCYCYITIDDHYLVDVETIGVIVNRSGKCLLVNNHLGIGIVKDKRISDSFGDVCMDTIFDFSEARELFSLTNDDNRNIAWDTDKLDDDTDIWTPVTEDDYKFLSRLVLYAKSQSDTVFDYYVLTGDTEPPTVFIFKVTRFYFNMLK.

It belongs to the poxviridae C4/C10 protein family.

The protein is Protein C10 of Vaccinia virus (strain Copenhagen) (VACV).